The following is a 107-amino-acid chain: Phosphoribosyl-ATP pyrophosphatase (107 aa).

It belongs to the PRA-PH family.

The protein localises to the cytoplasm. It carries out the reaction 1-(5-phospho-beta-D-ribosyl)-ATP + H2O = 1-(5-phospho-beta-D-ribosyl)-5'-AMP + diphosphate + H(+). It functions in the pathway amino-acid biosynthesis; L-histidine biosynthesis; L-histidine from 5-phospho-alpha-D-ribose 1-diphosphate: step 2/9. This is Phosphoribosyl-ATP pyrophosphatase from Bacillus cereus (strain ZK / E33L).